Reading from the N-terminus, the 376-residue chain is Integrator complex assembly factor WDR73 (376 aa).

3 WD repeats span residues 84 to 123 (FSEE…SDVI), 276 to 316 (ASKN…TESS), and 337 to 376 (TSPA…ITDR). A disordered region spans residues 316-336 (SSPQPIFSHRGHEMSQEAKSS).

The protein belongs to the WD repeat WDR73 family.

The protein localises to the cytoplasm. Its subcellular location is the cytoskeleton. The protein resides in the spindle. It is found in the spindle pole. It localises to the cleavage furrow. Functionally, component of a multiprotein complex required for the assembly of the RNA endonuclease module of the integrator complex. Associates with ints9 and ints11 in the cytoplasm, stabilizing the ints9-ints11 heterodimer and blocking the active site of ints11. Brat1 then joins the complex and plugs the active site of ints11, leading to wdr73 release and nuclear import of ints9 and ints11. This is Integrator complex assembly factor WDR73 (wdr73) from Danio rerio (Zebrafish).